We begin with the raw amino-acid sequence, 318 residues long: NADH-ubiquinone oxidoreductase chain 1 (318 aa).

8 consecutive transmembrane segments (helical) span residues 2 to 22 (FMIN…FLTL), 70 to 90 (MFII…SPLP), 100 to 120 (LGVL…LWSG), 136 to 156 (VAQT…VLLM), 172 to 192 (LWLL…TLAE), 222 to 242 (LFFL…AILF), 253 to 273 (ELYT…FLWI), and 294 to 314 (LPLT…TASI).

This sequence belongs to the complex I subunit 1 family. As to quaternary structure, core subunit of respiratory chain NADH dehydrogenase (Complex I) which is composed of 45 different subunits.

It localises to the mitochondrion inner membrane. The catalysed reaction is a ubiquinone + NADH + 5 H(+)(in) = a ubiquinol + NAD(+) + 4 H(+)(out). Its function is as follows. Core subunit of the mitochondrial membrane respiratory chain NADH dehydrogenase (Complex I) which catalyzes electron transfer from NADH through the respiratory chain, using ubiquinone as an electron acceptor. Essential for the catalytic activity and assembly of complex I. In Balaenoptera physalus (Fin whale), this protein is NADH-ubiquinone oxidoreductase chain 1 (MT-ND1).